A 243-amino-acid chain; its full sequence is Phosphoribosyl isomerase A (243 aa).

Asp-9 (proton acceptor) is an active-site residue. The Proton donor role is filled by Asp-128.

The protein belongs to the HisA/HisF family.

The protein resides in the cytoplasm. The catalysed reaction is 1-(5-phospho-beta-D-ribosyl)-5-[(5-phospho-beta-D-ribosylamino)methylideneamino]imidazole-4-carboxamide = 5-[(5-phospho-1-deoxy-D-ribulos-1-ylimino)methylamino]-1-(5-phospho-beta-D-ribosyl)imidazole-4-carboxamide. It carries out the reaction N-(5-phospho-beta-D-ribosyl)anthranilate = 1-(2-carboxyphenylamino)-1-deoxy-D-ribulose 5-phosphate. It participates in amino-acid biosynthesis; L-histidine biosynthesis; L-histidine from 5-phospho-alpha-D-ribose 1-diphosphate: step 4/9. Its pathway is amino-acid biosynthesis; L-tryptophan biosynthesis; L-tryptophan from chorismate: step 3/5. Functionally, involved in both the histidine and tryptophan biosynthetic pathways. The protein is Phosphoribosyl isomerase A of Mycobacterium avium (strain 104).